The following is a 309-amino-acid chain: MSQSSSTGNFDVASLVEDVNLRRVAQYALVVFFLGFFLVPLETGIMTAIKTNESVARSLPFAPPVGEGFTLGNIQFALEQLSGSFFNSLIMSIPATIGSVLFGSMAAYGLTMVNWRAQMGMLMLFVVGVFVPYQAVLVPLARFWNNIFPLARMIEPMVASIPFFQGYHAELVPLVITHIAYGIPICTILFRSYYQSLPNSLVEAGKIDGASITKIYRRIILPISKPMFGVVFIYQFTQIYNEFLFAFTLVTGSDAPAAPVTLVLPAIGASTSGINFGIRMSAAFLAAVPTLILYVAFAEQFAKGLRTEA.

6 helical membrane-spanning segments follow: residues 29-49 (LVVFFLGFFLVPLETGIMTAI), 89-109 (LIMSIPATIGSVLFGSMAAYG), 121-141 (MLMLFVVGVFVPYQAVLVPLA), 170-190 (ELVPLVITHIAYGIPICTILF), 227-247 (MFGVVFIYQFTQIYNEFLFAF), and 282-302 (AAFLAAVPTLILYVAFAEQFA). Positions 85 to 297 (FFNSLIMSIP…VPTLILYVAF (213 aa)) constitute an ABC transmembrane type-1 domain.

The protein belongs to the binding-protein-dependent transport system permease family. In terms of assembly, the complex is composed of two ATP-binding proteins (XacJ and XacK), two transmembrane proteins (XacH and XacI) and a solute-binding protein (XacG).

The protein resides in the cell membrane. Functionally, part of the ABC transporter complex XacGHIJK involved in the uptake of xylose and arabinose. Responsible for the translocation of the substrate across the membrane. This is Xylose/arabinose import permease protein XacI from Haloferax volcanii (strain ATCC 29605 / DSM 3757 / JCM 8879 / NBRC 14742 / NCIMB 2012 / VKM B-1768 / DS2) (Halobacterium volcanii).